We begin with the raw amino-acid sequence, 323 residues long: Acetyl-coenzyme A carboxylase carboxyl transferase subunit alpha (323 aa).

The 255-residue stretch at 39–293 (RLSKKSQQLT…RRALADSLRQ (255 aa)) folds into the CoA carboxyltransferase C-terminal domain.

Belongs to the AccA family. As to quaternary structure, acetyl-CoA carboxylase is a heterohexamer composed of biotin carboxyl carrier protein (AccB), biotin carboxylase (AccC) and two subunits each of ACCase subunit alpha (AccA) and ACCase subunit beta (AccD).

Its subcellular location is the cytoplasm. It catalyses the reaction N(6)-carboxybiotinyl-L-lysyl-[protein] + acetyl-CoA = N(6)-biotinyl-L-lysyl-[protein] + malonyl-CoA. Its pathway is lipid metabolism; malonyl-CoA biosynthesis; malonyl-CoA from acetyl-CoA: step 1/1. Functionally, component of the acetyl coenzyme A carboxylase (ACC) complex. First, biotin carboxylase catalyzes the carboxylation of biotin on its carrier protein (BCCP) and then the CO(2) group is transferred by the carboxyltransferase to acetyl-CoA to form malonyl-CoA. This Burkholderia orbicola (strain AU 1054) protein is Acetyl-coenzyme A carboxylase carboxyl transferase subunit alpha.